A 520-amino-acid chain; its full sequence is L-tyrosine:2-oxoglutarate aminotransferase amt1 (520 aa).

This sequence belongs to the class-I pyridoxal-phosphate-dependent aminotransferase family. The cofactor is pyridoxal 5'-phosphate.

It catalyses the reaction L-tyrosine + 2-oxoglutarate = 3-(4-hydroxyphenyl)pyruvate + L-glutamate. It functions in the pathway secondary metabolite biosynthesis. Its function is as follows. An L-tyrosine:2-oxoglutarate aminotransferase (probably amt1) and atromentin synthetase nps3 catalyze consecutive steps to turn over L-tyrosine into atromentin, which represents the generic precursor molecule for the entire terphenylquinone and pulvinic acid family of pigments, which are widely distributed secondary metabolites in homobasidiomycetes. The first step catalyzed by amt1 converts L-tyrosine in to 4-hydroxyphenylpyruvate (4-HPP). Adenylation of two 4-HPP monomers by the nps3 adenylation (A) domain, covalent tethering of the monomers as a thioester and oxoester onto the nps3 thiolation (T) and thioesterase (TE) domains, respectively, and symmetric C-C-bond formation between two monomers catalyzed by the nps3 TE domain leads to atromentin. Follow-up products of atromentin in S.lacrymans include atromentic acid, xerocomic acid, isoxerocomic acid and variegatic acid. The chain is L-tyrosine:2-oxoglutarate aminotransferase amt1 (amt1) from Serpula lacrymans var. lacrymans (strain S7.9) (Dry rot fungus).